The primary structure comprises 326 residues: MSLLLGQIVDALGGSLQGGSRDTPICRIAPLQAAGPGDLSVLSHPRYQQQLAASRAACVIVAPALRAAALARGACILAEQPYAYFARATQLWRQHHAPAPAPGVHASAVLDPTAQVHPTASIGPLCILERGAQVGAGSRLQARVTVGADCRIGARCLLHAGVVVGADGFGFAPEDGQWIKIEQLGAVRIGDDVEIGANTCIDRGTLQDTVIEDGVKLDNLIQIGHNVRIGKHSALAGCVGVAGSARIGAHCTIGGGAIVLGHLELADHVHISAATVVTRSLTRPGQYTGLFPIDDNARWEKNAATLKQLHSLRERIKALEQALKAA.

His225 serves as the catalytic Proton acceptor.

The protein belongs to the transferase hexapeptide repeat family. LpxD subfamily. In terms of assembly, homotrimer.

It catalyses the reaction a UDP-3-O-[(3R)-3-hydroxyacyl]-alpha-D-glucosamine + a (3R)-hydroxyacyl-[ACP] = a UDP-2-N,3-O-bis[(3R)-3-hydroxyacyl]-alpha-D-glucosamine + holo-[ACP] + H(+). The protein operates within bacterial outer membrane biogenesis; LPS lipid A biosynthesis. Its function is as follows. Catalyzes the N-acylation of UDP-3-O-acylglucosamine using 3-hydroxyacyl-ACP as the acyl donor. Is involved in the biosynthesis of lipid A, a phosphorylated glycolipid that anchors the lipopolysaccharide to the outer membrane of the cell. This is UDP-3-O-acylglucosamine N-acyltransferase from Verminephrobacter eiseniae (strain EF01-2).